Consider the following 338-residue polypeptide: Peroxidase 15 (338 aa).

The signal sequence occupies residues 1-22 (MARIGSFLIILYLIYALTLCIC). Disulfide bonds link Cys-45/Cys-125, Cys-78/Cys-83, Cys-131/Cys-332, and Cys-210/Cys-242. His-76 serves as the catalytic Proton acceptor. Ca(2+)-binding residues include Asp-77, Val-80, Gly-82, Asp-84, and Ser-86. Pro-173 contributes to the substrate binding site. N-linked (GlcNAc...) asparagine glycosylation occurs at Asn-176. Position 203 (His-203) interacts with heme b. Thr-204 contacts Ca(2+). Asn-219 and Asn-250 each carry an N-linked (GlcNAc...) asparagine glycan. Residues Asp-255, Ser-258, and Asp-263 each contribute to the Ca(2+) site.

This sequence belongs to the peroxidase family. Classical plant (class III) peroxidase subfamily. It depends on heme b as a cofactor. Ca(2+) is required as a cofactor.

It is found in the secreted. It carries out the reaction 2 a phenolic donor + H2O2 = 2 a phenolic radical donor + 2 H2O. In terms of biological role, removal of H(2)O(2), oxidation of toxic reductants, biosynthesis and degradation of lignin, suberization, auxin catabolism, response to environmental stresses such as wounding, pathogen attack and oxidative stress. These functions might be dependent on each isozyme/isoform in each plant tissue. This chain is Peroxidase 15 (PER15), found in Arabidopsis thaliana (Mouse-ear cress).